A 405-amino-acid polypeptide reads, in one-letter code: Secreted aspartic protease 8 (405 aa).

An N-terminal signal peptide occupies residues Met1–Ala25. An N-linked (GlcNAc...) asparagine glycan is attached at Asn50. Positions Thr52–Val78 are disordered. A compositionally biased stretch (low complexity) spans His58 to Gln70. The Peptidase A1 domain occupies Tyr89–Ala392. Residue Asp107 is part of the active site. Asp107 to Gly109 provides a ligand contact to pepstatin A. A disulfide bond links Cys122 and Cys134. Asp292 is an active-site residue. Asp292–Thr296 provides a ligand contact to pepstatin A. The cysteines at positions 327 and 358 are disulfide-linked.

Belongs to the peptidase A1 family. Monomer.

Its subcellular location is the secreted. It carries out the reaction Preferential cleavage at the carboxyl of hydrophobic amino acids, but fails to cleave 15-Leu-|-Tyr-16, 16-Tyr-|-Leu-17 and 24-Phe-|-Phe-25 of insulin B chain. Activates trypsinogen, and degrades keratin.. In terms of biological role, secreted aspartic peptidases (SAPs) are a group of ten acidic hydrolases considered as key virulence factors. These enzymes supply the fungus with nutrient amino acids as well as are able to degrade the selected host's proteins involved in the immune defense. Moreover, acts toward human hemoglobin though limited proteolysis to generate a variety of antimicrobial hemocidins, enabling to compete with the other microorganisms of the same physiological niche using the microbicidal peptides generated from the host protein. Functionally, plays a key role in defense against host by cleaving histatin-5 (Hst 5), a peptide from human saliva that carries out fungicidal activity. The cleavage rate decreases in an order of SAP2 &gt; SAP9 &gt; SAP3 &gt; SAP7 &gt; SAP4 &gt; SAP1 &gt; SAP8. The hydrolysis of Hst 5 by SAP8 causes production of the DSHAKRHHGY, HHSHRGY and FHEKHHSHRGY peptides. This Candida albicans (Yeast) protein is Secreted aspartic protease 8.